Consider the following 341-residue polypeptide: Alpha-1,4-N-acetylglucosaminyltransferase (341 aa).

Over 1-4 (MLKE) the chain is Cytoplasmic. Residues 5-25 (IYLSLSLVLVFACGLLYQLTM) traverse the membrane as a helical; Signal-anchor for type II membrane protein segment. At 26 to 341 (RSQCFFACLP…VSKKPGTGSR (316 aa)) the chain is on the lumenal side. Residue asparagine 100 is glycosylated (N-linked (GlcNAc...) asparagine). Residues 168–170 (DTD) carry the DXD motif motif.

Belongs to the glycosyltransferase 32 family.

The protein resides in the golgi apparatus membrane. It participates in protein modification; protein glycosylation. Its function is as follows. Catalyzes the transfer of N-acetylglucosamine (GlcNAc) to core 2 branched O-glycans. Necessary for the synthesis of type III mucin which is specifically produced in the stomach, duodenum, and pancreatic duct. May protect against inflammation-associated gastric adenocarcinoma. The protein is Alpha-1,4-N-acetylglucosaminyltransferase of Mus musculus (Mouse).